A 332-amino-acid polypeptide reads, in one-letter code: Myogenic-determination protein (332 aa).

The segment at 22–54 (HNGYGQPTHPGYGFSAYSQQNPIAHPGQNPHQT) is disordered. The 52-residue stretch at 161–212 (DRRKAATMRERRRLRKVNEAFEILKRRTSSNPNQRLPKVEILRNAIEYIESL) folds into the bHLH domain. Residues 293–309 (TTSPIQNKATPSASDTQ) are compositionally biased toward polar residues. The tract at residues 293 to 332 (TTSPIQNKATPSASDTQSPPSSGATAPTSLHVNFKRKCST) is disordered. Over residues 310–321 (SPPSSGATAPTS) the composition is skewed to low complexity.

In terms of assembly, efficient DNA binding requires dimerization with another bHLH protein.

It localises to the nucleus. May play an important role in the early development of muscle. This is Myogenic-determination protein (nau) from Drosophila melanogaster (Fruit fly).